The chain runs to 124 residues: Large ribosomal subunit protein bL12 (124 aa).

This sequence belongs to the bacterial ribosomal protein bL12 family. In terms of assembly, homodimer. Part of the ribosomal stalk of the 50S ribosomal subunit. Forms a multimeric L10(L12)X complex, where L10 forms an elongated spine to which 2 to 4 L12 dimers bind in a sequential fashion. Binds GTP-bound translation factors.

In terms of biological role, forms part of the ribosomal stalk which helps the ribosome interact with GTP-bound translation factors. Is thus essential for accurate translation. The sequence is that of Large ribosomal subunit protein bL12 from Phytoplasma australiense.